The chain runs to 546 residues: Hexose transporter HXT10 (546 aa).

The Cytoplasmic segment spans residues 1 to 44 (MVSSSVSILGTSAKASTSLSRKDEIKLTPETREASLDIPYKPII). The chain crosses the membrane as a helical span at residues 45-65 (AYWTVMGLCLMIAFGGFIFGW). Residues 66–100 (DTGTISGFINQTDFKRRFGELQRDGSFQLSDVRTG) lie on the Extracellular side of the membrane. Residue Asn75 is glycosylated (N-linked (GlcNAc...) asparagine). The helical transmembrane segment at 101–121 (LIVGIFNIGCALGGLTLGRLG) threads the bilayer. The Cytoplasmic portion of the chain corresponds to 122 to 127 (DIYGRK). Residues 128-148 (IGLMCVILVYVVGIVIQIASS) traverse the membrane as a helical segment. Residues 149–158 (DKWYQYFIGR) are Extracellular-facing. A helical transmembrane segment spans residues 159–179 (IVSGMGVGGVAVLSPTLISEI). The Cytoplasmic portion of the chain corresponds to 180 to 185 (SPKHLR). A helical transmembrane segment spans residues 186–206 (GTCVSFYQLMITLGIFLGYCT). Over 207 to 220 (NYGTKKYSNSIQWR) the chain is Extracellular. A helical membrane pass occupies residues 221–241 (VPLGLCFAWAIFMVIGMVMVP). At 242–324 (ESPRYLVEKG…IQSLQQLTGC (83 aa)) the chain is on the cytoplasmic side. The chain crosses the membrane as a helical span at residues 325–341 (NYFFYYGTTIFNAVGMQ). Residues 342 to 347 (DSFETS) are Extracellular-facing. Residues 348–365 (IVLGAVNFASTFVALYIV) traverse the membrane as a helical segment. Residues 366-372 (DKFGRRK) lie on the Cytoplasmic side of the membrane. The chain crosses the membrane as a helical span at residues 373 to 393 (CLLWGSASMAICFVIFATVGV). Topologically, residues 394-415 (TRLWPQGKDQPSSQSAGNVMIV) are extracellular. A helical transmembrane segment spans residues 416 to 436 (FTCFFIFSFAITWAPIAYVIV). The Cytoplasmic segment spans residues 437–453 (AETYPLRVKNRAMAIAV). A helical transmembrane segment spans residues 454-474 (GANWMWGFLIGFFTPFITRSI). Gly475 is a topological domain (extracellular). The helical transmembrane segment at 476-496 (FSYGYVFMGCLIFSYFYVFFF) threads the bilayer. Residues 497-546 (VCETKGLTLEEVNEMYEERIKPWKSGGWIPSSRRTPQPTSSTPLVIVDSK) lie on the Cytoplasmic side of the membrane.

The protein belongs to the major facilitator superfamily. Sugar transporter (TC 2.A.1.1) family.

The protein resides in the membrane. In terms of biological role, probable glucose transporter. This chain is Hexose transporter HXT10 (HXT10), found in Saccharomyces cerevisiae (strain ATCC 204508 / S288c) (Baker's yeast).